The primary structure comprises 509 residues: Ribonuclease Y (509 aa).

The chain crosses the membrane as a helical span at residues 1 to 21 (MIILVAVVTAVISFGLGYVVA). Positions 199–259 (TVSTVSLPSD…IRREIARLTL (61 aa)) constitute a KH domain. The HD domain occupies 325 to 418 (VLDHSIEVAQ…VAAADALSAA (94 aa)).

It belongs to the RNase Y family.

It localises to the cell membrane. Its function is as follows. Endoribonuclease that initiates mRNA decay. The sequence is that of Ribonuclease Y from Pseudothermotoga lettingae (strain ATCC BAA-301 / DSM 14385 / NBRC 107922 / TMO) (Thermotoga lettingae).